The primary structure comprises 232 residues: ATP synthase subunit a (232 aa).

A run of 6 helical transmembrane segments spans residues Leu-18–Ile-38, Trp-74–Phe-94, Thr-107–Phe-127, Ala-142–Leu-162, Gly-173–Val-193, and Ser-195–Ile-215.

The protein belongs to the ATPase A chain family. As to quaternary structure, F-type ATPases have 2 components, CF(1) - the catalytic core - and CF(0) - the membrane proton channel. CF(1) has five subunits: alpha(3), beta(3), gamma(1), delta(1), epsilon(1). CF(0) has three main subunits: a, b and c.

It localises to the mitochondrion inner membrane. Mitochondrial membrane ATP synthase (F(1)F(0) ATP synthase or Complex V) produces ATP from ADP in the presence of a proton gradient across the membrane which is generated by electron transport complexes of the respiratory chain. F-type ATPases consist of two structural domains, F(1) - containing the extramembraneous catalytic core and F(0) - containing the membrane proton channel, linked together by a central stalk and a peripheral stalk. During catalysis, ATP synthesis in the catalytic domain of F(1) is coupled via a rotary mechanism of the central stalk subunits to proton translocation. Key component of the proton channel; it may play a direct role in the translocation of protons across the membrane. This chain is ATP synthase subunit a (ATP6), found in Paracentrotus lividus (Common sea urchin).